We begin with the raw amino-acid sequence, 137 residues long: Cytochrome b5 (137 aa).

Residues 6 to 82 (KKVYTLEEVA…MDEYYVGDID (77 aa)) enclose the Cytochrome b5 heme-binding domain. H41 and H65 together coordinate heme. A helical transmembrane segment spans residues 108-128 (FIIKILQFLVPLAILGLAVAI).

This sequence belongs to the cytochrome b5 family.

It is found in the endoplasmic reticulum membrane. Its subcellular location is the microsome membrane. Functionally, membrane bound hemoprotein which function as an electron carrier for several membrane bound oxygenases. This is Cytochrome b5 from Oryza sativa subsp. japonica (Rice).